The sequence spans 111 residues: Prostatic steroid-binding protein C1 (111 aa).

The signal sequence occupies residues 1–23; the sequence is MSTIKLSLCLLIMLAVCCYEANA.

This sequence belongs to the secretoglobin family. Lipophilin subfamily. In terms of assembly, prostatein is composed of three different peptides called C1, C2 and C3. These form covalent C1:C3 (F) and C2:C3 (S) heterodimers whose noncovalent association forms tetrameric (C1:C3/C3:C2) prostatein molecules.

It localises to the secreted. In terms of biological role, part of prostatein which is the major secretory glycoprotein of ventral prostate gland. This is Prostatic steroid-binding protein C1 (Psbpc1) from Rattus norvegicus (Rat).